The sequence spans 706 residues: Polyribonucleotide nucleotidyltransferase (706 aa).

Residues Asp487 and Asp493 each contribute to the Mg(2+) site. The KH domain maps to 554 to 613 (PRIHTMKISSDKIKDVIGKGGAVIRALCEETGTTIEIEDDGTIKIAATEGAAAKEAIRRI). Residues 623-691 (GRIYQGKVAR…RQGRVRLSMK (69 aa)) enclose the S1 motif domain.

The protein belongs to the polyribonucleotide nucleotidyltransferase family. In terms of assembly, component of the RNA degradosome, which is a multiprotein complex involved in RNA processing and mRNA degradation. The cofactor is Mg(2+).

It localises to the cytoplasm. It carries out the reaction RNA(n+1) + phosphate = RNA(n) + a ribonucleoside 5'-diphosphate. Involved in mRNA degradation. Catalyzes the phosphorolysis of single-stranded polyribonucleotides processively in the 3'- to 5'-direction. The chain is Polyribonucleotide nucleotidyltransferase from Vibrio atlanticus (strain LGP32) (Vibrio splendidus (strain Mel32)).